A 327-amino-acid polypeptide reads, in one-letter code: Beta-ketoacyl-[acyl-carrier-protein] synthase III 2 (327 aa).

Residues Cys-114 and His-251 contribute to the active site. Positions 252–256 (SANLR) are ACP-binding. The active site involves Asn-281.

This sequence belongs to the thiolase-like superfamily. FabH family. Homodimer.

The protein resides in the cytoplasm. It carries out the reaction malonyl-[ACP] + acetyl-CoA + H(+) = 3-oxobutanoyl-[ACP] + CO2 + CoA. The protein operates within lipid metabolism; fatty acid biosynthesis. In terms of biological role, catalyzes the condensation reaction of fatty acid synthesis by the addition to an acyl acceptor of two carbons from malonyl-ACP. Catalyzes the first condensation reaction which initiates fatty acid synthesis and may therefore play a role in governing the total rate of fatty acid production. Possesses both acetoacetyl-ACP synthase and acetyl transacylase activities. Its substrate specificity determines the biosynthesis of branched-chain and/or straight-chain of fatty acids. This is Beta-ketoacyl-[acyl-carrier-protein] synthase III 2 from Bacillus anthracis.